Reading from the N-terminus, the 389-residue chain is Mannitol-1-phosphate 5-dehydrogenase (389 aa).

5–16 (AVHFGAGNIGRG) provides a ligand contact to NAD(+). Lysine 215 is a catalytic residue.

The protein belongs to the mannitol dehydrogenase family. As to quaternary structure, monomer.

The catalysed reaction is D-mannitol 1-phosphate + NAD(+) = beta-D-fructose 6-phosphate + NADH + H(+). Its function is as follows. Catalyzes the NAD(H)-dependent interconversion of D-fructose 6-phosphate and D-mannitol 1-phosphate in the mannitol metabolic pathway. This is Mannitol-1-phosphate 5-dehydrogenase from Sclerotinia sclerotiorum (strain ATCC 18683 / 1980 / Ss-1) (White mold).